The chain runs to 358 residues: Phenylalanine--tRNA ligase alpha subunit (358 aa).

E258 provides a ligand contact to Mg(2+).

Belongs to the class-II aminoacyl-tRNA synthetase family. Phe-tRNA synthetase alpha subunit type 1 subfamily. Tetramer of two alpha and two beta subunits. It depends on Mg(2+) as a cofactor.

It localises to the cytoplasm. It carries out the reaction tRNA(Phe) + L-phenylalanine + ATP = L-phenylalanyl-tRNA(Phe) + AMP + diphosphate + H(+). This Rhodospirillum centenum (strain ATCC 51521 / SW) protein is Phenylalanine--tRNA ligase alpha subunit.